An 87-amino-acid chain; its full sequence is Mu-conotoxin cal12b (87 aa).

A signal peptide spans 1–19 (MKLTCVLVVLLLLLPYGDL). A propeptide spanning residues 20 to 42 (ITNNYIRGAARKVTPWRRNLKTR) is cleaved from the precursor. Disulfide bonds link Cys45-Cys58, Cys53-Cys70, Cys60-Cys75, and Cys69-Cys81. Trp59 is subject to 6'-bromotryptophan. The residue at position 65 (Pro65) is a 4-hydroxyproline. Trp79 and Trp80 each carry 6'-bromotryptophan. Pro82 carries the 4-hydroxyproline modification. Trp86 is modified (6'-bromotryptophan).

In terms of tissue distribution, expressed by the venom duct.

It localises to the secreted. In terms of biological role, mu-conotoxins block voltage-gated sodium channels. This toxin reversibly blocks voltage-gated sodium channel in cephalopods (tested on squid giant-fiber-lobe neurons) with an inhibitor constant (Ki) of 15 nmol/l, with no alteration in the voltage dependence of sodium conductance or on the kinetics of inactivation. Has no effect on sodium channels of the two gastropod S.luhuanus and A.californica (which are not natural prey). The sequence is that of Mu-conotoxin cal12b from Californiconus californicus (California cone).